The chain runs to 247 residues: Probable transcriptional regulatory protein GTNG_2524 (247 aa).

Residues 1–14 (MAGHSKWKNIQRRK) show a composition bias toward basic residues. Positions 1 to 21 (MAGHSKWKNIQRRKNAQDAKR) are disordered.

The protein belongs to the TACO1 family.

It is found in the cytoplasm. This is Probable transcriptional regulatory protein GTNG_2524 from Geobacillus thermodenitrificans (strain NG80-2).